The chain runs to 218 residues: 4-coumaroyl-homoserine lactone synthase (218 aa).

Belongs to the autoinducer synthase family.

It catalyses the reaction 4-coumaroyl-CoA + S-adenosyl-L-methionine = N-(4-coumaroyl)-L-homoserine lactone + S-methyl-5'-thioadenosine + CoA + H(+). In terms of biological role, catalyzes the synthesis of 4-coumaroyl-homoserine lactone, a quorum-sensing (QS) autoinducer molecule which binds to RpaR transcriptional regulator to regulate expression of QS-dependent genes. This chain is 4-coumaroyl-homoserine lactone synthase, found in Rhodopseudomonas palustris (strain ATCC BAA-98 / CGA009).